We begin with the raw amino-acid sequence, 606 residues long: UvrABC system protein C (606 aa).

A GIY-YIG domain is found at 14-93 (QNPGVYLMKD…IKKHSPRYNV (80 aa)). Positions 203-238 (PDLINRLKFEMQTEADLEHFERAAQIRDTILAIQTT) constitute a UVR domain.

It belongs to the UvrC family. In terms of assembly, interacts with UvrB in an incision complex.

It localises to the cytoplasm. The UvrABC repair system catalyzes the recognition and processing of DNA lesions. UvrC both incises the 5' and 3' sides of the lesion. The N-terminal half is responsible for the 3' incision and the C-terminal half is responsible for the 5' incision. This chain is UvrABC system protein C, found in Desulforapulum autotrophicum (strain ATCC 43914 / DSM 3382 / VKM B-1955 / HRM2) (Desulfobacterium autotrophicum).